Reading from the N-terminus, the 133-residue chain is Large ribosomal subunit protein uL22 (133 aa).

This sequence belongs to the universal ribosomal protein uL22 family. As to quaternary structure, part of the 50S ribosomal subunit.

Functionally, this protein binds specifically to 23S rRNA; its binding is stimulated by other ribosomal proteins, e.g. L4, L17, and L20. It is important during the early stages of 50S assembly. It makes multiple contacts with different domains of the 23S rRNA in the assembled 50S subunit and ribosome. The globular domain of the protein is located near the polypeptide exit tunnel on the outside of the subunit, while an extended beta-hairpin is found that lines the wall of the exit tunnel in the center of the 70S ribosome. This is Large ribosomal subunit protein uL22 from Nocardia farcinica (strain IFM 10152).